Consider the following 130-residue polypeptide: Small ribosomal subunit protein uS9 (130 aa).

It belongs to the universal ribosomal protein uS9 family.

The protein is Small ribosomal subunit protein uS9 of Anaeromyxobacter dehalogenans (strain 2CP-1 / ATCC BAA-258).